The following is a 126-amino-acid chain: Large ribosomal subunit protein bL12 (126 aa).

It belongs to the bacterial ribosomal protein bL12 family. As to quaternary structure, homodimer. Part of the ribosomal stalk of the 50S ribosomal subunit. Forms a multimeric L10(L12)X complex, where L10 forms an elongated spine to which 2 to 4 L12 dimers bind in a sequential fashion. Binds GTP-bound translation factors.

In terms of biological role, forms part of the ribosomal stalk which helps the ribosome interact with GTP-bound translation factors. Is thus essential for accurate translation. The protein is Large ribosomal subunit protein bL12 of Nitrosococcus oceani (strain ATCC 19707 / BCRC 17464 / JCM 30415 / NCIMB 11848 / C-107).